The primary structure comprises 111 residues: Large ribosomal subunit protein uL22 (111 aa).

The protein belongs to the universal ribosomal protein uL22 family. As to quaternary structure, part of the 50S ribosomal subunit.

In terms of biological role, this protein binds specifically to 23S rRNA; its binding is stimulated by other ribosomal proteins, e.g. L4, L17, and L20. It is important during the early stages of 50S assembly. It makes multiple contacts with different domains of the 23S rRNA in the assembled 50S subunit and ribosome. The globular domain of the protein is located near the polypeptide exit tunnel on the outside of the subunit, while an extended beta-hairpin is found that lines the wall of the exit tunnel in the center of the 70S ribosome. In Geotalea daltonii (strain DSM 22248 / JCM 15807 / FRC-32) (Geobacter daltonii), this protein is Large ribosomal subunit protein uL22.